The sequence spans 148 residues: UPF0591 membrane protein C15E1.02c (148 aa).

3 helical membrane passes run 14 to 34 (AILLGIAFDHAASFLVYGPLM), 80 to 102 (LLQLTGTVTLKGAFFVGLYVFGA), and 122 to 142 (ILVKTISSLVKSVGLSVALIG).

This sequence belongs to the UPF0591 family.

The protein resides in the membrane. This is UPF0591 membrane protein C15E1.02c from Schizosaccharomyces pombe (strain 972 / ATCC 24843) (Fission yeast).